Consider the following 107-residue polypeptide: Flagellar transcriptional regulator FlhD (107 aa).

This sequence belongs to the FlhD family. As to quaternary structure, homodimer; disulfide-linked. Forms a heterohexamer composed of two FlhC and four FlhD subunits. Each FlhC binds a FlhD dimer, forming a heterotrimer, and a hexamer assembles by dimerization of two heterotrimers.

The protein resides in the cytoplasm. Functions in complex with FlhC as a master transcriptional regulator that regulates transcription of several flagellar and non-flagellar operons by binding to their promoter region. Activates expression of class 2 flagellar genes, including fliA, which is a flagellum-specific sigma factor that turns on the class 3 genes. Also regulates genes whose products function in a variety of physiological pathways. This Bordetella bronchiseptica (strain ATCC BAA-588 / NCTC 13252 / RB50) (Alcaligenes bronchisepticus) protein is Flagellar transcriptional regulator FlhD.